Reading from the N-terminus, the 359-residue chain is Guanine nucleotide-binding protein subunit alpha-11 (359 aa).

Residues Cys9 and Cys10 are each lipidated (S-palmitoyl cysteine). Residues 38–359 enclose the G-alpha domain; that stretch reads RELKLLLLGT…QLNLKEYNLV (322 aa). A G1 motif region spans residues 41-54; it reads KLLLLGTGESGKST. Residues 46–53 and 180–183 contribute to the GTP site; these read GTGESGKS and LRVR. Mg(2+) is bound at residue Ser53. Positions 178–186 are G2 motif; sequence DVLRVRVPT. Thr186 provides a ligand contact to Mg(2+). The tract at residues 201 to 210 is G3 motif; sequence FRMVDVGGQR. The segment at 270-277 is G4 motif; it reads ILFLNKKD. GTP is bound by residues 274–277 and Ala331; that span reads NKKD. The segment at 329 to 334 is G5 motif; sequence TCATDT.

Belongs to the G-alpha family. G(q) subfamily. As to quaternary structure, g proteins are composed of 3 units; alpha, beta and gamma. The alpha chain contains the guanine nucleotide binding site. Interacts with RGS22. Interacts with NTSR1.

Its subcellular location is the cell membrane. It is found in the cytoplasm. It catalyses the reaction GTP + H2O = GDP + phosphate + H(+). Its function is as follows. Guanine nucleotide-binding proteins (G proteins) function as transducers downstream of G protein-coupled receptors (GPCRs) in numerous signaling cascades. The alpha chain contains the guanine nucleotide binding site and alternates between an active, GTP-bound state and an inactive, GDP-bound state. Signaling by an activated GPCR promotes GDP release and GTP binding. The alpha subunit has a low GTPase activity that converts bound GTP to GDP, thereby terminating the signal. Both GDP release and GTP hydrolysis are modulated by numerous regulatory proteins. Signaling is mediated via phospholipase C-beta-dependent inositol lipid hydrolysis for signal propagation: activates phospholipase C-beta: following GPCR activation, GNA11 activates PLC-beta (PLCB1, PLCB2, PLCB3 or PLCB4), leading to production of diacylglycerol (DAG) and inositol 1,4,5-trisphosphate (IP3). Transduces FFAR4 signaling in response to long-chain fatty acids (LCFAs). Together with GNAQ, required for heart development. In the respiratory epithelium, transmits OXGR1-dependent signals that lead to downstream intracellular Ca(2+) release and mucocilliary clearance of airborne pathogens. This Rattus norvegicus (Rat) protein is Guanine nucleotide-binding protein subunit alpha-11 (Gna11).